We begin with the raw amino-acid sequence, 770 residues long: Cyclopiane-type diterpene synthase (770 aa).

The interval 5-335 (ITDEYAVGID…VPRYCKVDRN (331 aa)) is terpene cyclase. Residues Asp97 and Asp101 each contribute to the Mg(2+) site. Residues Asp97, Asp101, 190–193 (RIVD), Asn234, 238–242 (SWDKE), and 328–329 (RY) contribute to the substrate site. The short motif at 97-101 (DDETD) is the DDXXD 1 element. Positions 234–242 (NDLFSWDKE) match the NSE/DTE motif. Positions 336–720 (PYKDHLEKYG…WALRLLIMKL (385 aa)) are prenyltransferase. The disordered stretch occupies residues 371 to 397 (NQLKEPSSSTYKTHFSPLEPNPGPEQT). The span at 374 to 383 (KEPSSSTYKT) shows a compositional bias: polar residues. 3 residues coordinate isopentenyl diphosphate: Lys423, Arg426, and His455. Mg(2+)-binding residues include Asp462 and Asp466. A DDXXD 2 motif is present at residues 462-466 (DDIQD). Arg471 is a binding site for dimethylallyl diphosphate. Position 472 (Arg472) interacts with isopentenyl diphosphate. Residues Lys548, Thr549, Gln584, Asn591, Lys620, and Lys630 each coordinate dimethylallyl diphosphate.

This sequence in the N-terminal section; belongs to the terpene synthase family. It in the C-terminal section; belongs to the FPP/GGPP synthase family. As to quaternary structure, hexamer. Mg(2+) serves as cofactor.

It catalyses the reaction isopentenyl diphosphate + (2E,6E)-farnesyl diphosphate = (2E,6E,10E)-geranylgeranyl diphosphate + diphosphate. It carries out the reaction (2E,6E,10E)-geranylgeranyl diphosphate + H2O = (+)-penichrysol + diphosphate. The protein operates within secondary metabolite biosynthesis; terpenoid biosynthesis. Bifunctional terpene synthase converts dimethylallyl diphosphate (DMAPP) and isopentenyl diphosphate (IPP) into a cyclopiane-type diterpene. The C-terminal prenyltransferase (PT) domain of PcCS catalyzes formation of geranylgeranyl pyrophosphate (GGPP), whereas the N-terminal terpene cyclase (TC) domain catalyzes the cyclization of GGPP to the cyclopiane-type diterpene penichrysol. The sequence is that of Cyclopiane-type diterpene synthase from Penicillium chrysogenum (Penicillium notatum).